The sequence spans 192 residues: Adenylate kinase (192 aa).

ATP is bound at residue 10–18 (GVPGVGSTT).

It belongs to the archaeal adenylate kinase family. In terms of assembly, monomer.

Its subcellular location is the cytoplasm. It catalyses the reaction AMP + ATP = 2 ADP. This chain is Adenylate kinase, found in Methanococcus vannielii (strain ATCC 35089 / DSM 1224 / JCM 13029 / OCM 148 / SB).